We begin with the raw amino-acid sequence, 561 residues long: 4-coumarate--CoA ligase 3 (561 aa).

ATP is bound by residues Ser-213, Ser-214, Gly-215, Thr-216, Thr-217, and Lys-221. Tyr-263 and Ser-267 together coordinate (E)-4-coumaroyl-AMP. CoA is bound at residue Lys-284. The interval 286 to 355 (EIGALLDLIQ…RRLPQAILGQ (70 aa)) is SBD1. Ala-333, Gln-355, Gly-356, Thr-360, and Met-368 together coordinate (E)-4-coumaroyl-AMP. ATP-binding residues include Gln-355, Gly-356, and Thr-360. Positions 356–423 (GYGMTEAGPV…IRGQQIMKEY (68 aa)) are SBD2. Residues Asp-444 and Arg-459 each coordinate ATP. (E)-4-coumaroyl-AMP-binding residues include Lys-461 and Lys-465. Lys-467 and Gly-468 together coordinate CoA. Lys-550 provides a ligand contact to ATP.

The protein belongs to the ATP-dependent AMP-binding enzyme family. Mg(2+) serves as cofactor. Preferentially expressed in leaves, flowers and siliques.

The enzyme catalyses (E)-4-coumarate + ATP + CoA = (E)-4-coumaroyl-CoA + AMP + diphosphate. The catalysed reaction is (E)-caffeate + ATP + CoA = (E)-caffeoyl-CoA + AMP + diphosphate. It catalyses the reaction (E)-ferulate + ATP + CoA = (E)-feruloyl-CoA + AMP + diphosphate. It carries out the reaction (E)-4-coumarate + ATP + H(+) = (E)-4-coumaroyl-AMP + diphosphate. The enzyme catalyses (E)-4-coumaroyl-AMP + CoA = (E)-4-coumaroyl-CoA + AMP + H(+). The catalysed reaction is (E)-caffeate + ATP + H(+) = (E)-caffeoyl-AMP + diphosphate. It catalyses the reaction (E)-caffeoyl-AMP + CoA = (E)-caffeoyl-CoA + AMP + H(+). It carries out the reaction (E)-ferulate + ATP + H(+) = (E)-feruloyl-AMP + diphosphate. The enzyme catalyses (E)-feruloyl-AMP + CoA = (E)-feruloyl-CoA + AMP + H(+). It participates in phytoalexin biosynthesis; 3,4',5-trihydroxystilbene biosynthesis; 3,4',5-trihydroxystilbene from trans-4-coumarate: step 1/2. In terms of biological role, produces CoA thioesters of a variety of hydroxy- and methoxy-substituted cinnamic acids, which are used to synthesize several phenylpropanoid-derived compounds, including anthocyanins, flavonoids, isoflavonoids, coumarins, lignin, suberin and wall-bound phenolics. Follows a two-step reaction mechanism, wherein the carboxylate substrate first undergoes adenylation by ATP, followed by a thioesterification in the presence of CoA to yield the final CoA thioesters. This chain is 4-coumarate--CoA ligase 3, found in Arabidopsis thaliana (Mouse-ear cress).